The following is a 203-amino-acid chain: 8-oxoguanine DNA glycosylase/AP lyase (203 aa).

Catalysis depends on residues K128 and D146.

The protein belongs to the type-2 OGG1 family.

It catalyses the reaction 2'-deoxyribonucleotide-(2'-deoxyribose 5'-phosphate)-2'-deoxyribonucleotide-DNA = a 3'-end 2'-deoxyribonucleotide-(2,3-dehydro-2,3-deoxyribose 5'-phosphate)-DNA + a 5'-end 5'-phospho-2'-deoxyribonucleoside-DNA + H(+). Its function is as follows. Catalyzes the excision of an oxidatively damaged form of guanine (7,8-dihydro-8-oxoguanine = 8-oxoG) from DNA. Also cleaves the DNA backbone at apurinic/apyrimidinic sites (AP sites). The polypeptide is 8-oxoguanine DNA glycosylase/AP lyase (Sulfolobus acidocaldarius (strain ATCC 33909 / DSM 639 / JCM 8929 / NBRC 15157 / NCIMB 11770)).